The sequence spans 109 residues: Ubiquitin-related modifier 1 homolog (109 aa).

G109 carries the 1-thioglycine modification. G109 participates in a covalent cross-link: Glycyl lysine isopeptide (Gly-Lys) (interchain with K-? in acceptor proteins).

Belongs to the URM1 family. Post-translationally, C-terminal thiocarboxylation occurs in 2 steps, it is first acyl-adenylated (-COAMP) via the hesA/moeB/thiF part of the MOCS3 homolog, then thiocarboxylated (-COSH) via the rhodanese domain of the MOCS3 homolog.

It is found in the cytoplasm. Its pathway is tRNA modification; 5-methoxycarbonylmethyl-2-thiouridine-tRNA biosynthesis. Functionally, acts as a sulfur carrier required for 2-thiolation of mcm(5)S(2)U at tRNA wobble positions of cytosolic tRNA(Lys), tRNA(Glu) and tRNA(Gln). Serves as sulfur donor in tRNA 2-thiolation reaction by being thiocarboxylated (-COSH) at its C-terminus by MOCS3. The sulfur is then transferred to tRNA to form 2-thiolation of mcm(5)S(2)U. Also acts as a ubiquitin-like protein (UBL) that is covalently conjugated via an isopeptide bond to lysine residues of target proteins. The thiocarboxylated form serves as substrate for conjugation and oxidative stress specifically induces the formation of UBL-protein conjugates. In Bombyx mori (Silk moth), this protein is Ubiquitin-related modifier 1 homolog.